The primary structure comprises 529 residues: Lanosterol 14-alpha demethylase (529 aa).

Residue Cys468 coordinates heme.

It belongs to the cytochrome P450 family. Requires heme as cofactor.

The protein localises to the membrane. It catalyses the reaction a 14alpha-methyl steroid + 3 reduced [NADPH--hemoprotein reductase] + 3 O2 = a Delta(14) steroid + formate + 3 oxidized [NADPH--hemoprotein reductase] + 4 H2O + 4 H(+). The catalysed reaction is a 14alpha-methyl steroid + reduced [NADPH--hemoprotein reductase] + O2 = a 14alpha-hydroxymethyl steroid + oxidized [NADPH--hemoprotein reductase] + H2O + H(+). The enzyme catalyses a 14alpha-hydroxymethyl steroid + reduced [NADPH--hemoprotein reductase] + O2 = a 14alpha-formyl steroid + oxidized [NADPH--hemoprotein reductase] + 2 H2O + H(+). It carries out the reaction a 14alpha-formyl steroid + reduced [NADPH--hemoprotein reductase] + O2 = a Delta(14) steroid + formate + oxidized [NADPH--hemoprotein reductase] + H2O + 2 H(+). It catalyses the reaction lanosterol + 3 reduced [NADPH--hemoprotein reductase] + 3 O2 = 4,4-dimethyl-5alpha-cholesta-8,14,24-trien-3beta-ol + formate + 3 oxidized [NADPH--hemoprotein reductase] + 4 H2O + 4 H(+). The catalysed reaction is lanosterol + reduced [NADPH--hemoprotein reductase] + O2 = 32-hydroxylanosterol + oxidized [NADPH--hemoprotein reductase] + H2O + H(+). The enzyme catalyses 32-hydroxylanosterol + reduced [NADPH--hemoprotein reductase] + O2 = 32-oxolanosterol + oxidized [NADPH--hemoprotein reductase] + 2 H2O + H(+). It carries out the reaction 32-oxolanosterol + reduced [NADPH--hemoprotein reductase] + O2 = 4,4-dimethyl-5alpha-cholesta-8,14,24-trien-3beta-ol + formate + oxidized [NADPH--hemoprotein reductase] + H2O + 2 H(+). It catalyses the reaction eburicol + 3 reduced [NADPH--hemoprotein reductase] + 3 O2 = 14-demethyleburicol + formate + 3 oxidized [NADPH--hemoprotein reductase] + 4 H2O + 4 H(+). The catalysed reaction is eburicol + reduced [NADPH--hemoprotein reductase] + O2 = 32-hydroxyeburicol + oxidized [NADPH--hemoprotein reductase] + H2O + H(+). The enzyme catalyses 32-hydroxyeburicol + reduced [NADPH--hemoprotein reductase] + O2 = 32-oxoeburicol + oxidized [NADPH--hemoprotein reductase] + 2 H2O + H(+). It carries out the reaction 32-oxoeburicol + reduced [NADPH--hemoprotein reductase] + O2 = 14-demethyleburicol + formate + oxidized [NADPH--hemoprotein reductase] + H2O + 2 H(+). It functions in the pathway steroid biosynthesis; zymosterol biosynthesis; zymosterol from lanosterol: step 1/6. In terms of biological role, sterol 14alpha-demethylase that plays a critical role in the third module of ergosterol biosynthesis pathway, being ergosterol the major sterol component in fungal membranes that participates in a variety of functions. The third module or late pathway involves the ergosterol synthesis itself through consecutive reactions that mainly occur in the endoplasmic reticulum (ER) membrane. In filamentous fungi, during the initial step of this module, lanosterol (lanosta-8,24-dien-3beta-ol) can be metabolized to eburicol. Sterol 14alpha-demethylase catalyzes the three-step oxidative removal of the 14alpha-methyl group (C-32) of both these sterols in the form of formate, and converts eburicol and lanosterol to 14-demethyleburicol (4,4,24-trimethylergosta-8,14,24(28)-trienol) and 4,4-dimethyl-5alpha-cholesta-8,14,24-trien-3beta-ol, respectively, which are further metabolized by other enzymes in the pathway to ergosterol. Can also use substrates not intrinsic to fungi, such as 24,25-dihydrolanosterol (DHL), producing 4,4-dimethyl-8,14-cholestadien-3-beta-ol, but at lower rates than the endogenous substrates. The chain is Lanosterol 14-alpha demethylase (ERG11) from Eremothecium gossypii (strain ATCC 10895 / CBS 109.51 / FGSC 9923 / NRRL Y-1056) (Yeast).